Here is an 865-residue protein sequence, read N- to C-terminus: Probable beta-glucosidase J (865 aa).

Aspartate 233 is a catalytic residue. N-linked (GlcNAc...) asparagine glycans are attached at residues asparagine 330, asparagine 447, asparagine 503, and asparagine 764. One can recognise a PA14 domain in the interval 411–579 (TGQPGYTFRV…DTDTAIQQAV (169 aa)).

It belongs to the glycosyl hydrolase 3 family.

The protein resides in the secreted. The catalysed reaction is Hydrolysis of terminal, non-reducing beta-D-glucosyl residues with release of beta-D-glucose.. Its pathway is glycan metabolism; cellulose degradation. Its function is as follows. Beta-glucosidases are one of a number of cellulolytic enzymes involved in the degradation of cellulosic biomass. Catalyzes the last step releasing glucose from the inhibitory cellobiose. The polypeptide is Probable beta-glucosidase J (bglJ) (Aspergillus fumigatus (strain CBS 144.89 / FGSC A1163 / CEA10) (Neosartorya fumigata)).